The following is a 617-amino-acid chain: MSPQRDRINAFYKDNPHPKGSRIVINREHLMIDRPYVLLAVLFVMFLSLIGLLAIAGIRLHRAAIYTAEIHKSLSTNLDVTNSIEHQVKDVLTPLFKIIGDEVGLRTPQRFTDLVKFISDKIKFLNPDREYDFRDLTWCINPPERIKLDYDQYCADVAAEELMNALVNSTLLETRTTNQFLAVSKGNCSGPTTIRGQFSNMSLSLLDLYLGRGYNVSSIVTMTSQGMYGGTYPVEKPNLSSKRSELSQLSMYRVFEVSVIRNPGLGAPVFHMTNYLEQPVSNDLSNCMVALGELKLAALCHGEDSITIPYQGSGKGVSFQLVKLGVWKSPTGMQSWVPLSTDDPVIDRLYLSSHRGVIADNQAKWAVPTTRTDDKLRMETCFQQACKGKIQALCENPECVPLKDNRIPSYGVLSVDLSLTVELKIKIASGFGPLITHGSGMDLYKSNHNNVYWLTIPPMKNLALGVINTLEWIPRFKVSPYLFTVPIKEAGEDCHAPTYLPAEVDGDVKLSSNLVILPGQDLQYVLATYDTSRVEHAVVYYVYSPGRSFSYFYPFRLPIKGVPIELQVECFTWDQKLWCRHFCVLADSESGGHITHSGMVGMGVSCTVTREDGTNRR.

The Intravirion portion of the chain corresponds to 1–37 (MSPQRDRINAFYKDNPHPKGSRIVINREHLMIDRPYV). Positions 1 to 154 (MSPQRDRINA…RIKLDYDQYC (154 aa)) are stalk. Residues 38-58 (LLAVLFVMFLSLIGLLAIAGI) traverse the membrane as a helical; Signal-anchor for type II membrane protein segment. Topologically, residues 59 to 617 (RLHRAAIYTA…VTREDGTNRR (559 aa)) are virion surface. N-linked (GlcNAc...) asparagine; by host glycans are attached at residues asparagine 168, asparagine 187, asparagine 200, asparagine 215, and asparagine 238. 5 cysteine pairs are disulfide-bonded: cysteine 188/cysteine 606, cysteine 287/cysteine 300, cysteine 381/cysteine 494, cysteine 386/cysteine 394, and cysteine 570/cysteine 579. The segment at 458–543 (PMKNLALGVI…VEHAVVYYVY (86 aa)) is interaction with host NECTIN4 receptor.

It belongs to the paramyxoviruses hemagglutinin-neuraminidase family. Non-sialidase subfamily. As to quaternary structure, homodimer; disulfide-linked. Further forms homotetramer (dimer of dimers). Interacts (via C-terminus) with human NECTIN4 (via N-terminus); this interaction allows attachment to the respiratory epithelium and viral entry. Interacts (via C-terminus) with human SLAMF1/CD150 (via N-terminus); this interaction allows attachment and viral entry into the CD150-expressing immune cells. Interacts with human CD46 antigen; this interaction allows attachment and viral entry of vaccine and laboratory-adapted strains.

Its subcellular location is the virion membrane. The protein resides in the host cell membrane. Its function is as follows. Attaches the virus to the human SLAMF1/CD150 receptor for entry into host dendritic cells, macrophages, activated memory T cells and naive or memory B cells, thereby explaining the long immunosuppression that follows infection. In the respiratory airways, binds to the NECTIN4 receptor for entry into the host cell. Binding of H protein to the receptor induces a conformational change that allows the F protein to trigger virion/cell membranes fusion. The vaccine and laboratory-adapted strains use host CD46 as an alternate receptor. The high degree of interaction between H and CD46 results in down-regulation of the latter from the surface of infected cells, rendering them more sensitive to c3b-mediated complement lysis. This chain is Hemagglutinin glycoprotein (H), found in Homo sapiens (Human).